The sequence spans 321 residues: 1D-myo-inositol 2-acetamido-2-deoxy-alpha-D-glucopyranoside deacetylase (321 aa).

Residues His15, Asp18, and His150 each coordinate Zn(2+). The segment at 280 to 321 (PEGERESDLFAGLPPATDGTGAAGAPSATGAANPADAEGGAA) is disordered. Over residues 290 to 321 (AGLPPATDGTGAAGAPSATGAANPADAEGGAA) the composition is skewed to low complexity.

It belongs to the MshB deacetylase family. Zn(2+) serves as cofactor.

The enzyme catalyses 1D-myo-inositol 2-acetamido-2-deoxy-alpha-D-glucopyranoside + H2O = 1D-myo-inositol 2-amino-2-deoxy-alpha-D-glucopyranoside + acetate. Its function is as follows. Catalyzes the deacetylation of 1D-myo-inositol 2-acetamido-2-deoxy-alpha-D-glucopyranoside (GlcNAc-Ins) in the mycothiol biosynthesis pathway. This is 1D-myo-inositol 2-acetamido-2-deoxy-alpha-D-glucopyranoside deacetylase from Streptomyces griseus subsp. griseus (strain JCM 4626 / CBS 651.72 / NBRC 13350 / KCC S-0626 / ISP 5235).